A 326-amino-acid chain; its full sequence is Palmitoyltransferase SWF1 (326 aa).

A topological domain (lumenal) is located at residue methionine 1. A helical transmembrane segment spans residues 2–22 (MGALCALAVTQAGLILAAPAL). Residues 23-49 (RAYWPFSWYYHVVFRTVLQDTQRHRWK) are Cytoplasmic-facing. A helical transmembrane segment spans residues 50–70 (YWATPAFYAGVYAYCVWLFYG). Residues 71–85 (EVYAEIAKALWVPER) are Lumenal-facing. A helical transmembrane segment spans residues 86–106 (WVLPAAVVAPAAAGVAAAATP). The Cytoplasmic segment spans residues 107 to 164 (AAVPADAAYDGLLFHDGVECRTCRVRKPARSRHCGVCGRCVPLADHHCVWLNNCVGRG). The region spanning 124-174 (VECRTCRVRKPARSRHCGVCGRCVPLADHHCVWLNNCVGRGNYGLFYLALG) is the DHHC domain. The chain crosses the membrane as a helical span at residues 165-185 (NYGLFYLALGAHCALLTYGAV). The Lumenal segment spans residues 186–198 (RLPLAAPAGRWPR). The helical transmembrane segment at 199-219 (ALLALELLVASFAVLCVWFTA) threads the bilayer. Topologically, residues 220-326 (TQVALVRDGM…RIFRRRVRGL (107 aa)) are cytoplasmic.

The protein belongs to the DHHC palmitoyltransferase family. SWF1 subfamily.

Its subcellular location is the endoplasmic reticulum membrane. The catalysed reaction is L-cysteinyl-[protein] + hexadecanoyl-CoA = S-hexadecanoyl-L-cysteinyl-[protein] + CoA. Palmitoyltransferase that targets several endosomal SNAREs. Palmitoylates the SNAREs at cysteine residues close to the cytoplasmic end of their transmembrane domain. May have a role in the cellular quality control of transmembrane domain-containing proteins. This chain is Palmitoyltransferase SWF1 (SWF1), found in Eremothecium gossypii (strain ATCC 10895 / CBS 109.51 / FGSC 9923 / NRRL Y-1056) (Yeast).